The primary structure comprises 130 residues: Small ribosomal subunit protein uS9 (130 aa).

The protein belongs to the universal ribosomal protein uS9 family.

In Nitrosospira multiformis (strain ATCC 25196 / NCIMB 11849 / C 71), this protein is Small ribosomal subunit protein uS9.